The following is a 295-amino-acid chain: MMQPEKILGLIGRNIAYSRSPLIHNTACDLLALPYVYTIFNIASADLIEPAIAGARALGIAGLNVTTPYKTTVVPFLDELSPEAASIGAVNTIVNNNGHLAGYNTDIAGFAAPLRPYAQRIKGNPVSVFGNGGAALAAIEAFRIFFHPCCVYLFVRDSAKASAMLENYVHRDIVTLCLIEELFSGESGAIAKIQRSLVIVNATPIGTAGRQNETETSILPLDTELLHPDHIVYDMVYNPLFTPLIKAAKASGAATISGIEMLLGQAARSFELWTGKEMPLEQVRAVLINNLLSSP.

Shikimate is bound by residues serine 18 to serine 20 and threonine 66. Lysine 70 functions as the Proton acceptor in the catalytic mechanism. Residues asparagine 91 and aspartate 106 each coordinate shikimate. NADP(+)-binding positions include glycine 130–alanine 134 and methionine 235. Tyrosine 237 provides a ligand contact to shikimate. Glycine 258 contributes to the NADP(+) binding site.

The protein belongs to the shikimate dehydrogenase family. In terms of assembly, homodimer.

The enzyme catalyses shikimate + NADP(+) = 3-dehydroshikimate + NADPH + H(+). Its pathway is metabolic intermediate biosynthesis; chorismate biosynthesis; chorismate from D-erythrose 4-phosphate and phosphoenolpyruvate: step 4/7. Involved in the biosynthesis of the chorismate, which leads to the biosynthesis of aromatic amino acids. Catalyzes the reversible NADPH linked reduction of 3-dehydroshikimate (DHSA) to yield shikimate (SA). The protein is Shikimate dehydrogenase (NADP(+)) of Chlorobium phaeobacteroides (strain DSM 266 / SMG 266 / 2430).